The primary structure comprises 631 residues: Probable ATP-dependent RNA helicase DDX53 (631 aa).

Residues 48–109 form the KH domain; sequence EPPLCFKIKN…EMKAKAKAAI (62 aa). A Q motif motif is present at residues 222 to 250; the sequence is RFKDAFQQYPDLLKSIIRVGIVKPTPIQS. ATP-binding positions include K244, Q249, 268-273, and H311; that span reads TGTGKT. Residues 253–428 enclose the Helicase ATP-binding domain; the sequence is WPIILQGIDL…LSYLKDPMIV (176 aa). The DEAD box signature appears at 376-379; sequence DEAD. A Helicase C-terminal domain is found at 440–601; it reads TVKQNIIVTT…SVPEDLVVMA (162 aa).

It belongs to the DEAD box helicase family. In terms of tissue distribution, expressed in testis. Wide expression in various cancer tissues and cancer cell lines.

It is found in the nucleus. It carries out the reaction ATP + H2O = ADP + phosphate + H(+). This is Probable ATP-dependent RNA helicase DDX53 (DDX53) from Homo sapiens (Human).